The chain runs to 603 residues: MVASAGLLQTSLIWVAYAVAVALVFFVAVITVFTWQTPYDRSKLVTTVAIVSLTALLATVFLLPVDIALVSSTASASRGTKKDWATPERIHGILKTLKIVYYSLYSFDALLCLVVIPFAYFWYEEHDEVLEEEGRETWSTRFWQALKYTIAFIILVIILFLVGFFVPTAAQDHGRHLDLDYFKRLLTNNNGEKALSFGLGLLMTLGVLLYVLYTATGLALLPVSLIKSAPAISAPELSAMTAAELEHNRELQRQIEMRNAGRIVAMSQKDRRELDLLLREERTLVRRQRLAAEASGEGQSTIMRIWTKTQAVFRPLKLFGGILLLCLSVILWISMLITAIDKAANSVCKSHCGYILGHINVFQPVNWVFVKAAKAFPIDYILMAFLILFLFSSSITGIASVGIRFLWVRVFQLKKGRTAPQALLIATVMQALIILAINYAVVNLLAPQYAMYGTQTFCQALSLDPGAPPDCRNHRDMIRPCSESLTDPLAKDVCTPTVMSTFLNRIVLNWTVFGAIDFWAQFAFLTVFLLVFVTSLIRTPRLNLTEIDEEAQADEEEGLLASTSRRFGATWQDITGRAKRTVGGHPNGQGYGTSGTNGTASSR.

9 consecutive transmembrane segments (helical) span residues 13–33 (IWVAYAVAVALVFFVAVITVF), 50–70 (IVSLTALLATVFLLPVDIALV), 99–119 (IVYYSLYSFDALLCLVVIPFA), 150–170 (IAFIILVIILFLVGFFVPTAA), 201–221 (LLMTLGVLLYVLYTATGLALL), 318–338 (LFGGILLLCLSVILWISMLIT), 353–373 (GYILGHINVFQPVNWVFVKAA), 381–401 (ILMAFLILFLFSSSITGIASV), and 422–442 (ALLIATVMQALIILAINYAVV). Residue Asn-509 is glycosylated (N-linked (GlcNAc...) asparagine). The chain crosses the membrane as a helical span at residues 512-532 (VFGAIDFWAQFAFLTVFLLVF). The N-linked (GlcNAc...) asparagine glycan is linked to Asn-543. Residues 578–603 (AKRTVGGHPNGQGYGTSGTNGTASSR) are disordered. Over residues 585–595 (HPNGQGYGTSG) the composition is skewed to gly residues. An N-linked (GlcNAc...) asparagine glycan is attached at Asn-597.

Belongs to the LIMR family. LMBRD1 subfamily.

Its subcellular location is the lysosome membrane. Functionally, probable lysosomal cobalamin transporter. Required to export cobalamin from lysosomes allowing its conversion to cofactors. This chain is Probable lysosomal cobalamin transporter, found in Neurospora crassa (strain ATCC 24698 / 74-OR23-1A / CBS 708.71 / DSM 1257 / FGSC 987).